A 542-amino-acid polypeptide reads, in one-letter code: CTP synthase (542 aa).

The amidoligase domain stretch occupies residues 1–265 (MARYVFITGG…DSEVLSAFGM (265 aa)). Ser-13 lines the CTP pocket. Ser-13 is a binding site for UTP. 14–19 (SLGKGI) serves as a coordination point for ATP. Tyr-54 provides a ligand contact to L-glutamine. Residue Asp-71 coordinates ATP. Mg(2+) is bound by residues Asp-71 and Glu-139. Residues 146–148 (DIE), 186–191 (KTKPTQ), and Lys-222 each bind CTP. Residues 186–191 (KTKPTQ) and Lys-222 each bind UTP. The region spanning 291–541 (TIAVVGKYTG…IEATVEQSRL (251 aa)) is the Glutamine amidotransferase type-1 domain. L-glutamine is bound at residue Ala-353. Cys-380 functions as the Nucleophile; for glutamine hydrolysis in the catalytic mechanism. Residues 381–384 (FGMQ), Glu-404, and Arg-469 contribute to the L-glutamine site. Catalysis depends on residues His-514 and Glu-516.

It belongs to the CTP synthase family. As to quaternary structure, homotetramer.

The enzyme catalyses UTP + L-glutamine + ATP + H2O = CTP + L-glutamate + ADP + phosphate + 2 H(+). It carries out the reaction L-glutamine + H2O = L-glutamate + NH4(+). It catalyses the reaction UTP + NH4(+) + ATP = CTP + ADP + phosphate + 2 H(+). It functions in the pathway pyrimidine metabolism; CTP biosynthesis via de novo pathway; CTP from UDP: step 2/2. With respect to regulation, allosterically activated by GTP, when glutamine is the substrate; GTP has no effect on the reaction when ammonia is the substrate. The allosteric effector GTP functions by stabilizing the protein conformation that binds the tetrahedral intermediate(s) formed during glutamine hydrolysis. Inhibited by the product CTP, via allosteric rather than competitive inhibition. Catalyzes the ATP-dependent amination of UTP to CTP with either L-glutamine or ammonia as the source of nitrogen. Regulates intracellular CTP levels through interactions with the four ribonucleotide triphosphates. The protein is CTP synthase of Bartonella henselae (strain ATCC 49882 / DSM 28221 / CCUG 30454 / Houston 1) (Rochalimaea henselae).